Consider the following 299-residue polypeptide: ATP phosphoribosyltransferase (299 aa).

It belongs to the ATP phosphoribosyltransferase family. Long subfamily. In terms of assembly, equilibrium between an active dimeric form, an inactive hexameric form and higher aggregates. Interconversion between the various forms is largely reversible and is influenced by the natural substrates and inhibitors of the enzyme. Mg(2+) serves as cofactor.

The protein resides in the cytoplasm. It carries out the reaction 1-(5-phospho-beta-D-ribosyl)-ATP + diphosphate = 5-phospho-alpha-D-ribose 1-diphosphate + ATP. It functions in the pathway amino-acid biosynthesis; L-histidine biosynthesis; L-histidine from 5-phospho-alpha-D-ribose 1-diphosphate: step 1/9. Feedback inhibited by histidine. Its function is as follows. Catalyzes the condensation of ATP and 5-phosphoribose 1-diphosphate to form N'-(5'-phosphoribosyl)-ATP (PR-ATP). Has a crucial role in the pathway because the rate of histidine biosynthesis seems to be controlled primarily by regulation of HisG enzymatic activity. In Escherichia coli O17:K52:H18 (strain UMN026 / ExPEC), this protein is ATP phosphoribosyltransferase.